Here is a 189-residue protein sequence, read N- to C-terminus: Interferon alpha-H (189 aa).

Positions 1 to 23 are cleaved as a signal peptide; the sequence is MAPAWSFLLALLLLSCNAICSLG. Intrachain disulfides connect Cys-24-Cys-122 and Cys-52-Cys-162.

This sequence belongs to the alpha/beta interferon family.

It is found in the secreted. In terms of biological role, produced by macrophages, IFN-alpha have antiviral activities. Interferon stimulates the production of two enzymes: a protein kinase and an oligoadenylate synthetase. The polypeptide is Interferon alpha-H (IFNAH) (Bos taurus (Bovine)).